Reading from the N-terminus, the 85-residue chain is Cytochrome c2 (85 aa).

Heme c-binding residues include C12, C15, H16, and M61.

Belongs to the cytochrome c family. Post-translationally, binds 1 heme c group covalently per subunit.

Cytochrome c2 is found mainly in purple, non-sulfur, photosynthetic bacteria where it functions as the electron donor to the oxidized bacteriochlorophyll in the photophosphorylation pathway. However, it may also have a role in the respiratory chain and is found in some non-photosynthetic bacteria. This chain is Cytochrome c2, found in Rubrivivax gelatinosus (Rhodocyclus gelatinosus).